The sequence spans 189 residues: Interferon alpha-C (189 aa).

The N-terminal stretch at 1-23 (MAPAWSFRLALLLLSCNAICSLG) is a signal peptide. 2 disulfide bridges follow: cysteine 24-cysteine 122 and cysteine 52-cysteine 162.

This sequence belongs to the alpha/beta interferon family.

It localises to the secreted. Functionally, produced by macrophages, IFN-alpha have antiviral activities. Interferon stimulates the production of two enzymes: a protein kinase and an oligoadenylate synthetase. The chain is Interferon alpha-C (IFNAC) from Bos taurus (Bovine).